The following is a 1102-amino-acid chain: Voltage-gated delayed rectifier potassium channel KCNH8 (1102 aa).

The Cytoplasmic segment spans residues 1–225; sequence MPVMKGLLAP…HFSTFKAGWD (225 aa). In terms of domain architecture, PAS spans 18 to 90; the sequence is IATRFDGTHS…LQIEKSLEEK (73 aa). The PAC domain maps to 93-145; it reads FKGEIMFYKKNGAPFWCLLDIVPIKNEKGDVVLFLASFKDITDTKVKITSEDK. Residues 142–151 show a composition bias toward basic and acidic residues; sequence SEDKKEDRTK. The tract at residues 142–162 is disordered; that stretch reads SEDKKEDRTKGRSRAGSHFDS. Residues 226 to 246 form a helical membrane-spanning segment; it reads WLILLATFYVAVTVPYNVCFI. Over 247–255 the chain is Extracellular; sequence GNEDLSTTR. The chain crosses the membrane as a helical span at residues 256–276; that stretch reads STTVSDIAVEILFIIDIILNF. Over 277–298 the chain is Cytoplasmic; sequence RTTYVSKSGQVIFEARSICIHY. Residues 299–319 form a helical membrane-spanning segment; the sequence is VTTWFIIDLIAALPFDLLYAF. N-linked (GlcNAc...) asparagine glycosylation is present at Asn320. The Extracellular portion of the chain corresponds to 320 to 327; it reads NVTVVSLV. A helical; Voltage-sensor membrane pass occupies residues 328 to 348; that stretch reads HLLKTVRLLRLLRLLQKLDRY. The Cytoplasmic portion of the chain corresponds to 349–357; the sequence is SQHSTIVLT. The helical transmembrane segment at 358–378 threads the bilayer; the sequence is LLMSMFALLAHWMACIWYVIG. Over 379–419 the chain is Extracellular; sequence KMEREDNSLLKWEVGWLHELGKRLESPYYGNNTLGGPSIRS. N-linked (GlcNAc...) asparagine glycosylation occurs at Asn409. The segment at residues 420–440 is an intramembrane region (pore-forming); it reads AYIAALYFTLSSLTSVGFGNV. A Selectivity filter motif is present at residues 434–439; the sequence is SVGFGN. Residues 441–448 are Extracellular-facing; it reads SANTDAEK. A helical transmembrane segment spans residues 449–469; the sequence is IFSICTMLIGALMHALVFGNV. The Cytoplasmic segment spans residues 470–1102; the sequence is TAIIQRMYSR…DVKDSKAINV (633 aa). The cNMP-binding domain stretch occupies residues 551-668; the sequence is LFECASRGCL…HKFVEDIQHD (118 aa). Residues 684–693 are compositionally biased toward polar residues; it reads RLSNKSTVSQ. Disordered stretches follow at residues 684–743, 764–841, and 960–991; these read RLSN…KKTG, HSPI…PEPR, and LVGSSPQRTEAHEQNPADSELHHSPNLDYSPS. A compositionally biased stretch (acidic residues) spans 710-723; the sequence is VEDEEEEEVEEEET. Over residues 724–737 the composition is skewed to polar residues; that stretch reads TSLSPIYTRGSSVS. The segment covering 968–984 has biased composition (basic and acidic residues); it reads TEAHEQNPADSELHHSP.

It belongs to the potassium channel family. H (Eag) (TC 1.A.1.20) subfamily. Kv12.1/KCNH8 sub-subfamily. As to quaternary structure, the potassium channel is probably composed of a homo- or heterotetrameric complex of pore-forming alpha subunits that can associate with modulating beta subunits.

It localises to the membrane. It catalyses the reaction K(+)(in) = K(+)(out). In terms of biological role, pore-forming (alpha) subunit of a voltage-gated delayed rectifier potassium channel that mediates outward-rectifying potassium currents. Elicits a slowly activating, non-inactivating and slowly deactivation outwards potassium current at depolarizating voltages from -30 mV to +50mV. Shows no obvious change in the activation rate from different holding potentials. Activation is strongly dependent on the pH of the external solution. The polypeptide is Voltage-gated delayed rectifier potassium channel KCNH8 (Mus musculus (Mouse)).